The sequence spans 594 residues: F-box/LRR-repeat protein At3g58980 (594 aa).

The F-box domain maps to 1–49; it reads MDRISNLPNEIICHIVSFLSAKEAAFASILSKRWRNLFTIVIKLQFDDS. 15 LRR repeats span residues 103 to 125, 128 to 151, 152 to 174, 203 to 218, 219 to 242, 249 to 272, 288 to 314, 315 to 339, 344 to 369, 403 to 414, 415 to 437, 450 to 474, 503 to 518, 519 to 541, and 584 to 594; these read ILDL…VFTC, LVKL…DAFL, PALE…AFEK, SPTL…DLYE, CEFT…AVPD, LDSL…GYVD, LRNV…AIPV, FKNL…FLPF, CPNL…VCHC, LEKLSGLKLVKL, HSLT…SSKC, LPSL…AFQK, SQTL…YWAE, HNLE…AHVP, and LRNVEILRLWM.

This chain is F-box/LRR-repeat protein At3g58980, found in Arabidopsis thaliana (Mouse-ear cress).